Consider the following 85-residue polypeptide: MRPLLCALAGLALLCAVGALADGREDRGSPGDTGERPAGPARGPGLEPARGTLQPRPRPPRKRWLLSPGAGAQQLEVVHLPGSTL.

A signal peptide spans 1–21 (MRPLLCALAGLALLCAVGALA). Over residues 22 to 35 (DGREDRGSPGDTGE) the composition is skewed to basic and acidic residues. The interval 22-85 (DGREDRGSPG…EVVHLPGSTL (64 aa)) is disordered. Over residues 36–51 (RPAGPARGPGLEPARG) the composition is skewed to low complexity.

It localises to the secreted. This is an uncharacterized protein from Homo sapiens (Human).